The chain runs to 415 residues: 3-isopropylmalate dehydratase large subunit (415 aa).

[4Fe-4S] cluster-binding residues include Cys-295, Cys-353, and Cys-356.

The protein belongs to the aconitase/IPM isomerase family. LeuC type 2 subfamily. Heterodimer of LeuC and LeuD. It depends on [4Fe-4S] cluster as a cofactor.

It carries out the reaction (2R,3S)-3-isopropylmalate = (2S)-2-isopropylmalate. It functions in the pathway amino-acid biosynthesis; L-leucine biosynthesis; L-leucine from 3-methyl-2-oxobutanoate: step 2/4. Catalyzes the isomerization between 2-isopropylmalate and 3-isopropylmalate, via the formation of 2-isopropylmaleate. In Pyrobaculum aerophilum (strain ATCC 51768 / DSM 7523 / JCM 9630 / CIP 104966 / NBRC 100827 / IM2), this protein is 3-isopropylmalate dehydratase large subunit.